The chain runs to 185 residues: Peroxynitrite isomerase (185 aa).

Residues 1 to 21 (MHHPARELPFPDALRPGARPA) form a disordered region. Positions 34 to 40 (GTWRGTG) match the GXWXGXG motif. Residue His-171 coordinates heme b.

The protein belongs to the nitrobindin family. Homodimer. Heme b is required as a cofactor.

The enzyme catalyses peroxynitrite = nitrate. It functions in the pathway nitrogen metabolism. Functionally, heme-binding protein able to scavenge peroxynitrite and to protect free L-tyrosine against peroxynitrite-mediated nitration, by acting as a peroxynitrite isomerase that converts peroxynitrite to nitrate. Therefore, this protein likely plays a role in peroxynitrite sensing and in the detoxification of reactive nitrogen and oxygen species (RNS and ROS, respectively). Is able to bind nitric oxide (NO) in vitro, but may act as a sensor of peroxynitrite levels in vivo. This is Peroxynitrite isomerase from Streptomyces griseus subsp. griseus (strain JCM 4626 / CBS 651.72 / NBRC 13350 / KCC S-0626 / ISP 5235).